Here is a 290-residue protein sequence, read N- to C-terminus: Ribonuclease HIII (290 aa).

The 213-residue stretch at 78–290 (LPLIGTDEVG…FKNTEKAKNA (213 aa)) folds into the RNase H type-2 domain. D84, E85, and D187 together coordinate a divalent metal cation.

Belongs to the RNase HII family. RnhC subfamily. The cofactor is Mn(2+). Mg(2+) serves as cofactor.

Its subcellular location is the cytoplasm. The enzyme catalyses Endonucleolytic cleavage to 5'-phosphomonoester.. In terms of biological role, endonuclease that specifically degrades the RNA of RNA-DNA hybrids. This chain is Ribonuclease HIII, found in Streptococcus pneumoniae serotype 2 (strain D39 / NCTC 7466).